The chain runs to 200 residues: MSEALTELASYLGEARGNLIAASQLKYGELTLTATGENLIPLLTFLRDDAKCGFVNLIDICGVDWPQRELRFDVVYHLLSPKKNLRIRVKVATDEDTPVPSACGLYPGADWFERETWDMYGVLFTGHPDLRRILTDYGFEGHPLRKDFPTTGFVEVRYDDAAKRVVYEPVELKQEFRNFDFMSPWEGTEYVLPGDEKAKQ.

Belongs to the complex I 30 kDa subunit family. As to quaternary structure, NDH-1 is composed of 14 different subunits. Subunits NuoB, C, D, E, F, and G constitute the peripheral sector of the complex.

It localises to the cell inner membrane. The catalysed reaction is a quinone + NADH + 5 H(+)(in) = a quinol + NAD(+) + 4 H(+)(out). Its function is as follows. NDH-1 shuttles electrons from NADH, via FMN and iron-sulfur (Fe-S) centers, to quinones in the respiratory chain. The immediate electron acceptor for the enzyme in this species is believed to be ubiquinone. Couples the redox reaction to proton translocation (for every two electrons transferred, four hydrogen ions are translocated across the cytoplasmic membrane), and thus conserves the redox energy in a proton gradient. This Rhizobium etli (strain CIAT 652) protein is NADH-quinone oxidoreductase subunit C 1.